The primary structure comprises 762 residues: Ribosome-releasing factor 2, mitochondrial (762 aa).

Residues 1 to 35 constitute a mitochondrion transit peptide; it reads MLLSLTFPVLRGCTGHLVNRSLQAPRWRVTWKRSY. The 288-residue stretch at 54 to 341 folds into the tr-type G domain; sequence SKIRNIGIMA…AITAYLPAPN (288 aa). Residues 63-70, 127-131, and 181-184 contribute to the GTP site; these read AHIDAGKT, DTPGH, and NKMD.

The protein belongs to the TRAFAC class translation factor GTPase superfamily. Classic translation factor GTPase family. EF-G/EF-2 subfamily.

Its subcellular location is the mitochondrion. The catalysed reaction is GTP + H2O = GDP + phosphate + H(+). In terms of biological role, mitochondrial GTPase that mediates the disassembly of ribosomes from messenger RNA at the termination of mitochondrial protein biosynthesis. Acts in collaboration with mrrf. GTP hydrolysis follows the ribosome disassembly and probably occurs on the ribosome large subunit. Not involved in the GTP-dependent ribosomal translocation step during translation elongation. The protein is Ribosome-releasing factor 2, mitochondrial (gfm2) of Danio rerio (Zebrafish).